Here is a 285-residue protein sequence, read N- to C-terminus: G patch domain-containing protein 11 (285 aa).

Residues 51 to 87 (MLRQIREARRKEEKQQEANLKNRQKSLKEEEQERRDI) adopt a coiled-coil conformation. The segment at 59–84 (RRKEEKQQEANLKNRQKSLKEEEQER) is disordered. The region spanning 95–141 (CENKGFALLQKMGYKSGQALGKSGGGIVEPIPLNIKTGKSGIGHEAS) is the G-patch domain. Position 141 is a phosphoserine (S141). K149 is subject to N6-acetyllysine. Positions 218 to 235 (EETEEDEEEKEQDEDEYK) are enriched in acidic residues. A disordered region spans residues 218–237 (EETEEDEEEKEQDEDEYKSE).

Belongs to the GPATCH11 family.

Its subcellular location is the chromosome. The protein resides in the centromere. The protein localises to the kinetochore. This Homo sapiens (Human) protein is G patch domain-containing protein 11 (GPATCH11).